Here is an 88-residue protein sequence, read N- to C-terminus: Small ribosomal subunit protein uS15 (88 aa).

Belongs to the universal ribosomal protein uS15 family. In terms of assembly, part of the 30S ribosomal subunit. Forms a bridge to the 50S subunit in the 70S ribosome, contacting the 23S rRNA.

In terms of biological role, one of the primary rRNA binding proteins, it binds directly to 16S rRNA where it helps nucleate assembly of the platform of the 30S subunit by binding and bridging several RNA helices of the 16S rRNA. Forms an intersubunit bridge (bridge B4) with the 23S rRNA of the 50S subunit in the ribosome. The chain is Small ribosomal subunit protein uS15 from Psychrobacter cryohalolentis (strain ATCC BAA-1226 / DSM 17306 / VKM B-2378 / K5).